Reading from the N-terminus, the 261-residue chain is Cytochrome c oxidase subunit 3 (261 aa).

The Mitochondrial matrix portion of the chain corresponds to 1–15 (MTHQTHAYHMVNPSP). Residues 16 to 34 (WPLTGALSALLMTSGLAMW) traverse the membrane as a helical segment. Residues 35 to 40 (FHFNST) lie on the Mitochondrial intermembrane side of the membrane. A helical transmembrane segment spans residues 41-66 (LLLALGLLTNILTMYQWWRDIIREST). Over 67-72 (FQGHHT) the chain is Mitochondrial matrix. Residues 73–105 (SIVQKGLRYGMILFIISEVFFFSGFFWAFYHSS) form a helical membrane-spanning segment. Topologically, residues 106–128 (LAPTPELGGCWPPTGIHPLNPLE) are mitochondrial intermembrane. The chain crosses the membrane as a helical span at residues 129–152 (VPLLNTSVLLASGVSITWAHHSLM). Residues 153-155 (EGN) are Mitochondrial matrix-facing. Residues 156–183 (RKNMLQGLFITISLGVYFTLLQASEYYE) form a helical membrane-spanning segment. Residues 184–190 (ASFTISD) are Mitochondrial intermembrane-facing. Residues 191–223 (GVYGSTFFVATGFHGLHVIIGSTFLIVCFLRQL) form a helical membrane-spanning segment. At 224–232 (KFHFTSSHH) the chain is on the mitochondrial matrix side. The helical transmembrane segment at 233–256 (FGFEAAAWYWHFVDVVWLFLYVSI) threads the bilayer. Over 257-261 (YWWGS) the chain is Mitochondrial intermembrane.

Belongs to the cytochrome c oxidase subunit 3 family. Component of the cytochrome c oxidase (complex IV, CIV), a multisubunit enzyme composed of 14 subunits. The complex is composed of a catalytic core of 3 subunits MT-CO1, MT-CO2 and MT-CO3, encoded in the mitochondrial DNA, and 11 supernumerary subunits COX4I, COX5A, COX5B, COX6A, COX6B, COX6C, COX7A, COX7B, COX7C, COX8 and NDUFA4, which are encoded in the nuclear genome. The complex exists as a monomer or a dimer and forms supercomplexes (SCs) in the inner mitochondrial membrane with NADH-ubiquinone oxidoreductase (complex I, CI) and ubiquinol-cytochrome c oxidoreductase (cytochrome b-c1 complex, complex III, CIII), resulting in different assemblies (supercomplex SCI(1)III(2)IV(1) and megacomplex MCI(2)III(2)IV(2)).

The protein localises to the mitochondrion inner membrane. It catalyses the reaction 4 Fe(II)-[cytochrome c] + O2 + 8 H(+)(in) = 4 Fe(III)-[cytochrome c] + 2 H2O + 4 H(+)(out). Functionally, component of the cytochrome c oxidase, the last enzyme in the mitochondrial electron transport chain which drives oxidative phosphorylation. The respiratory chain contains 3 multisubunit complexes succinate dehydrogenase (complex II, CII), ubiquinol-cytochrome c oxidoreductase (cytochrome b-c1 complex, complex III, CIII) and cytochrome c oxidase (complex IV, CIV), that cooperate to transfer electrons derived from NADH and succinate to molecular oxygen, creating an electrochemical gradient over the inner membrane that drives transmembrane transport and the ATP synthase. Cytochrome c oxidase is the component of the respiratory chain that catalyzes the reduction of oxygen to water. Electrons originating from reduced cytochrome c in the intermembrane space (IMS) are transferred via the dinuclear copper A center (CU(A)) of subunit 2 and heme A of subunit 1 to the active site in subunit 1, a binuclear center (BNC) formed by heme A3 and copper B (CU(B)). The BNC reduces molecular oxygen to 2 water molecules using 4 electrons from cytochrome c in the IMS and 4 protons from the mitochondrial matrix. This chain is Cytochrome c oxidase subunit 3 (MT-CO3), found in Equus asinus (Donkey).